A 207-amino-acid polypeptide reads, in one-letter code: Protein GET1 (207 aa).

Topologically, residues 1–4 are lumenal; that stretch reads MPSL. Residues 5-24 traverse the membrane as a helical segment; the sequence is LISVLFLHIAIYIINTIGAS. At 25-110 the chain is on the cytoplasmic side; it reads TIDSLLWLIY…LFDVAVKALR (86 aa). A coiled-coil region spans residues 44–97; it reads MAREQHQMKLEVVQLKREMNATSSQDEFAKWAKLRRRHDKALEEYEVKNKQFSR. Residues 111–131 traverse the membrane as a helical segment; it reads WAGTSGLILLLQFWFSKTPIF. Topologically, residues 132 to 155 are lumenal; that stretch reads TLPPSWIPWQVEWVLSFPRAPMGT. Residues 156 to 172 form a helical membrane-spanning segment; that stretch reads VSIQVWGGACAVMVALV. The Cytoplasmic portion of the chain corresponds to 173-207; the sequence is GEAIGATVRYLYGSKDSMEAIKVGAGAVEKEKKRQ.

Belongs to the WRB/GET1 family. As to quaternary structure, interacts with GET3.

It localises to the endoplasmic reticulum membrane. Required for the post-translational delivery of tail-anchored (TA) proteins to the endoplasmic reticulum. Acts as a membrane receptor for soluble GET3, which recognizes and selectively binds the transmembrane domain of TA proteins in the cytosol. This chain is Protein GET1, found in Paracoccidioides lutzii (strain ATCC MYA-826 / Pb01) (Paracoccidioides brasiliensis).